A 120-amino-acid polypeptide reads, in one-letter code: NAD(P)H-quinone oxidoreductase subunit 3 (120 aa).

3 helical membrane passes run 6–26 (GYDAFLGFLLIAAAVPVLALV), 64–84 (MFALVFVIFDVETVFLYPWAV), and 89–109 (LGLLAFIEALIFIAILLVALA).

This sequence belongs to the complex I subunit 3 family. In terms of assembly, NDH-1 can be composed of about 15 different subunits; different subcomplexes with different compositions have been identified which probably have different functions.

It is found in the cellular thylakoid membrane. The enzyme catalyses a plastoquinone + NADH + (n+1) H(+)(in) = a plastoquinol + NAD(+) + n H(+)(out). It carries out the reaction a plastoquinone + NADPH + (n+1) H(+)(in) = a plastoquinol + NADP(+) + n H(+)(out). Functionally, NDH-1 shuttles electrons from an unknown electron donor, via FMN and iron-sulfur (Fe-S) centers, to quinones in the respiratory and/or the photosynthetic chain. The immediate electron acceptor for the enzyme in this species is believed to be plastoquinone. Couples the redox reaction to proton translocation, and thus conserves the redox energy in a proton gradient. Cyanobacterial NDH-1 also plays a role in inorganic carbon-concentration. This chain is NAD(P)H-quinone oxidoreductase subunit 3, found in Synechococcus sp. (strain CC9605).